The chain runs to 506 residues: GMP synthase [glutamine-hydrolyzing] (506 aa).

One can recognise a Glutamine amidotransferase type-1 domain in the interval 3-188; the sequence is GFVILDFGSQ…AQGMCKAPAD (186 aa). Cys80 (nucleophile) is an active-site residue. Active-site residues include His162 and Glu164. The GMPS ATP-PPase domain occupies 189-381; sequence WDAPHIKDIL…LGLPKEMLWR (193 aa). Residue 217–223 coordinates ATP; that stretch reads SGGVDST.

As to quaternary structure, homodimer.

It catalyses the reaction XMP + L-glutamine + ATP + H2O = GMP + L-glutamate + AMP + diphosphate + 2 H(+). The protein operates within purine metabolism; GMP biosynthesis; GMP from XMP (L-Gln route): step 1/1. Functionally, catalyzes the synthesis of GMP from XMP. This is GMP synthase [glutamine-hydrolyzing] from Bdellovibrio bacteriovorus (strain ATCC 15356 / DSM 50701 / NCIMB 9529 / HD100).